The chain runs to 273 residues: Urease accessory protein UreD (273 aa).

It belongs to the UreD family. UreD, UreF and UreG form a complex that acts as a GTP-hydrolysis-dependent molecular chaperone, activating the urease apoprotein by helping to assemble the nickel containing metallocenter of UreC. The UreE protein probably delivers the nickel.

The protein resides in the cytoplasm. In terms of biological role, required for maturation of urease via the functional incorporation of the urease nickel metallocenter. The chain is Urease accessory protein UreD from Rhizobium etli (strain ATCC 51251 / DSM 11541 / JCM 21823 / NBRC 15573 / CFN 42).